Reading from the N-terminus, the 465-residue chain is Asparagine--tRNA ligase (465 aa).

Belongs to the class-II aminoacyl-tRNA synthetase family. As to quaternary structure, homodimer.

The protein resides in the cytoplasm. The catalysed reaction is tRNA(Asn) + L-asparagine + ATP = L-asparaginyl-tRNA(Asn) + AMP + diphosphate + H(+). In Clostridium perfringens (strain ATCC 13124 / DSM 756 / JCM 1290 / NCIMB 6125 / NCTC 8237 / Type A), this protein is Asparagine--tRNA ligase.